Consider the following 249-residue polypeptide: Probable transcriptional regulatory protein mll3945 (249 aa).

It belongs to the TACO1 family.

It is found in the cytoplasm. The protein is Probable transcriptional regulatory protein mll3945 of Mesorhizobium japonicum (strain LMG 29417 / CECT 9101 / MAFF 303099) (Mesorhizobium loti (strain MAFF 303099)).